The primary structure comprises 314 residues: Coiled-coil domain-containing protein 42 like-2 (314 aa).

2 coiled-coil regions span residues 34-133 and 175-231; these read RLLE…KGTL and NKLL…FQWE.

This sequence belongs to the CFAP73 family.

The polypeptide is Coiled-coil domain-containing protein 42 like-2 (Xenopus tropicalis (Western clawed frog)).